The chain runs to 96 residues: Small ribosomal subunit protein bS6 (96 aa).

Belongs to the bacterial ribosomal protein bS6 family.

Binds together with bS18 to 16S ribosomal RNA. This is Small ribosomal subunit protein bS6 from Streptococcus uberis (strain ATCC BAA-854 / 0140J).